We begin with the raw amino-acid sequence, 356 residues long: UDP-N-acetylglucosamine--N-acetylmuramyl-(pentapeptide) pyrophosphoryl-undecaprenol N-acetylglucosamine transferase (356 aa).

UDP-N-acetyl-alpha-D-glucosamine-binding positions include 12-14, N120, R163, S187, and Q286; that span reads SGG.

It belongs to the glycosyltransferase 28 family. MurG subfamily.

Its subcellular location is the cell inner membrane. It catalyses the reaction di-trans,octa-cis-undecaprenyl diphospho-N-acetyl-alpha-D-muramoyl-L-alanyl-D-glutamyl-meso-2,6-diaminopimeloyl-D-alanyl-D-alanine + UDP-N-acetyl-alpha-D-glucosamine = di-trans,octa-cis-undecaprenyl diphospho-[N-acetyl-alpha-D-glucosaminyl-(1-&gt;4)]-N-acetyl-alpha-D-muramoyl-L-alanyl-D-glutamyl-meso-2,6-diaminopimeloyl-D-alanyl-D-alanine + UDP + H(+). It participates in cell wall biogenesis; peptidoglycan biosynthesis. Cell wall formation. Catalyzes the transfer of a GlcNAc subunit on undecaprenyl-pyrophosphoryl-MurNAc-pentapeptide (lipid intermediate I) to form undecaprenyl-pyrophosphoryl-MurNAc-(pentapeptide)GlcNAc (lipid intermediate II). This Pelagibacter ubique (strain HTCC1062) protein is UDP-N-acetylglucosamine--N-acetylmuramyl-(pentapeptide) pyrophosphoryl-undecaprenol N-acetylglucosamine transferase.